The chain runs to 512 residues: Maturase K (512 aa).

It belongs to the intron maturase 2 family. MatK subfamily.

The protein resides in the plastid. It localises to the chloroplast. Usually encoded in the trnK tRNA gene intron. Probably assists in splicing its own and other chloroplast group II introns. The protein is Maturase K of Dalea wrightii (Wright's prairie clover).